A 490-amino-acid polypeptide reads, in one-letter code: Cytochrome P450 71A25 (490 aa).

Residues 1–21 (MMMMIILLWSIIFMTILFLKK) form a helical membrane-spanning segment. Cysteine 431 provides a ligand contact to heme.

It belongs to the cytochrome P450 family. It depends on heme as a cofactor.

The protein resides in the membrane. This is Cytochrome P450 71A25 (CYP71A25) from Arabidopsis thaliana (Mouse-ear cress).